A 591-amino-acid chain; its full sequence is L-fucose isomerase (591 aa).

Residues Glu337 and Asp361 each act as proton acceptor in the active site. Mn(2+)-binding residues include Glu337, Asp361, and His528.

The protein belongs to the L-fucose isomerase family. As to quaternary structure, homohexamer. Mn(2+) is required as a cofactor.

It localises to the cytoplasm. It catalyses the reaction L-fucose = L-fuculose. The protein operates within carbohydrate degradation; L-fucose degradation; L-lactaldehyde and glycerone phosphate from L-fucose: step 1/3. Converts the aldose L-fucose into the corresponding ketose L-fuculose. The sequence is that of L-fucose isomerase from Escherichia coli O6:H1 (strain CFT073 / ATCC 700928 / UPEC).